A 606-amino-acid chain; its full sequence is NADH-ubiquinone oxidoreductase chain 5 (606 aa).

Met-1 is modified (N-formylmethionine). 15 consecutive transmembrane segments (helical) span residues 4 to 24 (FSSLSLVTLLLLTMPIMMMSF), 43 to 63 (AFITSMIPTMMFIHSGQELII), 87 to 107 (MMFIPVALFVTWSIMEFSMWY), 117 to 137 (FFKYLLLFLITMLILVTANNL), 140 to 160 (LFIGWEGVGIMSFLLIGWWYG), 171 to 191 (AILYNRIGDIGFILAMAWFLT), 213 to 233 (LIGLALAATGKSAQFGLHPWL), 241 to 261 (TPVSALLHSSTMVVAGIFLLI), 273 to 293 (IQSITLCLGAITTLFTAMCAL), 310 to 330 (LGLMMVTIGINQPYLAFLHIC), 366 to 386 (MPFTTTALIVGSLALTGMPFL), 413 to 433 (LIATSFTAIYSTRIIFFALLG), 457 to 477 (LLIGSLFAGYIISNNIPPTTI), 482 to 502 (MPYYLKTTALIVTILGFILAL), and 582 to 602 (GLIKLYFLSFLITILISMILF).

Core subunit of respiratory chain NADH dehydrogenase (Complex I) which is composed of 45 different subunits.

The protein resides in the mitochondrion inner membrane. The enzyme catalyses a ubiquinone + NADH + 5 H(+)(in) = a ubiquinol + NAD(+) + 4 H(+)(out). Core subunit of the mitochondrial membrane respiratory chain NADH dehydrogenase (Complex I) which catalyzes electron transfer from NADH through the respiratory chain, using ubiquinone as an electron acceptor. Essential for the catalytic activity and assembly of complex I. The sequence is that of NADH-ubiquinone oxidoreductase chain 5 (MT-ND5) from Bos taurus (Bovine).